Here is a 181-residue protein sequence, read N- to C-terminus: Large ribosomal subunit protein uL5c (181 aa).

Belongs to the universal ribosomal protein uL5 family. In terms of assembly, part of the 50S ribosomal subunit; contacts the 5S rRNA.

It localises to the plastid. It is found in the chloroplast. Functionally, binds 5S rRNA, forms part of the central protuberance of the 50S subunit. The protein is Large ribosomal subunit protein uL5c (rpl5) of Heterosigma akashiwo (strain NIES-293 / 8280G21-1).